Reading from the N-terminus, the 121-residue chain is Large ribosomal subunit protein eL8 (121 aa).

This sequence belongs to the eukaryotic ribosomal protein eL8 family. As to quaternary structure, part of the 50S ribosomal subunit. Probably part of the RNase P complex.

It is found in the cytoplasm. Its function is as follows. Multifunctional RNA-binding protein that recognizes the K-turn motif in ribosomal RNA, the RNA component of RNase P, box H/ACA, box C/D and box C'/D' sRNAs. This Thermoplasma volcanium (strain ATCC 51530 / DSM 4299 / JCM 9571 / NBRC 15438 / GSS1) protein is Large ribosomal subunit protein eL8.